Reading from the N-terminus, the 288-residue chain is Protease HtpX homolog (288 aa).

A run of 2 helical transmembrane segments spans residues 7–27 (TAVL…MLGG) and 29–49 (QGML…YWFS). His131 serves as a coordination point for Zn(2+). Glu132 is an active-site residue. Zn(2+) is bound at residue His135. The next 2 helical transmembrane spans lie at 141 to 161 (ILIS…ANFA) and 177 to 197 (IASL…QMSI). Glu202 is a binding site for Zn(2+).

This sequence belongs to the peptidase M48B family. Zn(2+) serves as cofactor.

It localises to the cell inner membrane. The polypeptide is Protease HtpX homolog (Polynucleobacter necessarius subsp. necessarius (strain STIR1)).